A 311-amino-acid polypeptide reads, in one-letter code: Olfactory receptor 10D1B (311 aa).

Over 1–24 (MKNLSVVTQFILLGIPHTEGVETM) the chain is Extracellular. Residues 25–45 (LFVLFFSFYIFTLVGNLLILL) form a helical membrane-spanning segment. Residues 46-54 (AIVSSSRLH) are Cytoplasmic-facing. The chain crosses the membrane as a helical span at residues 55–75 (TPMYFFLCQLSVCDIFFPSVS). Topologically, residues 76–95 (SPKMLFYLSGNTPAISYAGC) are extracellular. Residues C95 and C187 are joined by a disulfide bond. Residues 96–116 (VSQLFFYHFLGGTECFLYTVM) traverse the membrane as a helical segment. The Cytoplasmic segment spans residues 117-137 (AYDRFVAICYPLRYSVIMSHR). A helical transmembrane segment spans residues 138 to 158 (ICAFLAMGTAVFGCIHSTFLT). Residues 159 to 192 (TLTFQLPYCGPKDVNYYFCDIPVVMKLACADTST) lie on the Extracellular side of the membrane. The chain crosses the membrane as a helical span at residues 193 to 213 (LEMVGFISVGLMPLSCFFFIL). Topologically, residues 214 to 237 (TSYSCIVRSILQIRSTEGRHRAFS) are cytoplasmic. A helical transmembrane segment spans residues 238 to 258 (TCSAHFTAILLFYMPVIFIYL). Over 259–271 (RPTPSPWLDATVQ) the chain is Extracellular. The helical transmembrane segment at 272–288 (ILNNLVTPMLNPLIYSL) threads the bilayer. The Cytoplasmic segment spans residues 289 to 311 (RNKEVKSSLWTVLHLLCFLPKHL).

The protein belongs to the G-protein coupled receptor 1 family.

The protein localises to the cell membrane. Functionally, odorant receptor. This Mus musculus (Mouse) protein is Olfactory receptor 10D1B.